Here is a 147-residue protein sequence, read N- to C-terminus: Orcokinin peptides (147 aa).

Positions 1–27 (MPRHSVFALSILALSITATVWIPTVQA) are cleaved as a signal peptide. 2 consecutive propeptides follow at residues 28–89 (ETNL…ERFG) and 146–147 (FG).

The protein belongs to the orcokinin family.

The protein localises to the secreted. In terms of biological role, myotropic peptides. This is Orcokinin peptides from Apis mellifera (Honeybee).